The sequence spans 1193 residues: DNA-directed RNA polymerase subunit beta (1193 aa).

Positions 1173–1193 (QQAKEAAELEKAKEEALDKTE) are disordered. The span at 1177 to 1193 (EAAELEKAKEEALDKTE) shows a compositional bias: basic and acidic residues.

It belongs to the RNA polymerase beta chain family. The RNAP catalytic core consists of 2 alpha, 1 beta, 1 beta' and 1 omega subunit. When a sigma factor is associated with the core the holoenzyme is formed, which can initiate transcription.

The enzyme catalyses RNA(n) + a ribonucleoside 5'-triphosphate = RNA(n+1) + diphosphate. DNA-dependent RNA polymerase catalyzes the transcription of DNA into RNA using the four ribonucleoside triphosphates as substrates. The protein is DNA-directed RNA polymerase subunit beta of Streptococcus thermophilus (strain CNRZ 1066).